Reading from the N-terminus, the 104-residue chain is Replication restart protein PriB (104 aa).

The SSB domain maps to 1-101 (MTNRLTLSGT…LHAEQIELID (101 aa)).

This sequence belongs to the PriB family. In terms of assembly, homodimer. Interacts with PriA and DnaT. Component of the replication restart primosome. Primosome assembly occurs via a 'hand-off' mechanism. PriA binds to replication forks, subsequently PriB then DnaT bind; DnaT then displaces ssDNA to generate the helicase loading substrate.

Its function is as follows. Involved in the restart of stalled replication forks, which reloads the replicative helicase on sites other than the origin of replication; the PriA-PriB pathway is the major replication restart pathway. During primosome assembly it facilitates complex formation between PriA and DnaT on DNA; stabilizes PriA on DNA. Stimulates the DNA unwinding activity of PriA helicase. This Salmonella typhi protein is Replication restart protein PriB.